A 277-amino-acid chain; its full sequence is Methyltransferase str3 (277 aa).

This sequence belongs to the methyltransferase superfamily. LaeA methyltransferase family.

It functions in the pathway mycotoxin biosynthesis. In terms of biological role, methyltransferase; part of the gene cluster that mediates the biosynthesis of strobilurin A, an antifungal polyketide that contains a key beta-methoxyacrylate toxophore that targets the complex III of the mitochondrial electron transport chain. Strobilurin biosynthesis begins with construction of benzoyl CoA by step-wise elimination of ammonia from phenylalanine by the phenylalanine ammonia-lyase str11, oxygenation by str8 and retro-Claisen reaction to form benzoic acid, which is activated to its CoA thiolester benzoyl CoA by the dedicated CoA ligase str10. Benzoyl CoA forms the starter unit for the highly reducing polyketide synthase stpks1 that produces the polyketide prestrobilutin A. The FAD-dependent oxygenase str9 then catalyzes the key oxidative rearrangement responsible for the creation of the beta-methoxyacrylate toxophore. Str9 performs epoxidation of the 2,3 olefin of prestrobilutin A, followed by Meinwald rearrangement to furnish the aldehyde intermediate. Rapid enolization of the aldehyde intermediate would give the beta-methoxyacrylate skeleton and methylations catalyzed by str2 and str3 complete the synthesis and lead to the production of strobilurin A. The short-chain dehydrogenase stl2 and the dehydrogenase str4 play a role in the shunt pathway leading to the production of bolineol. The cluster encodes no obvious halogenase gene that could be involved in production of strobilurin B, nor any obvious dimethylallyl-transferase that could be involved in the production of strobilurin G. It is possible that unknown proteins encoded in, or near, the cluster (such as str1 or stl1) may form new classes of halogenases or dimethylally-transferases, or that the responsible genes are located elsewhere on the genome. Similarly, proteins encoded by str5/str6 hydrolases appear to have no chemical role in the biosynthesis of strobilurin A. Finally, no obvious self-resistance gene is found within the cluster. This is Methyltransferase str3 from Strobilurus tenacellus.